The following is a 525-amino-acid chain: Cysteine--tRNA ligase (525 aa).

A Zn(2+)-binding site is contributed by cysteine 49. The 'HIGH' region motif lies at 51 to 61 (VTVYDLCHLGH). Zn(2+)-binding residues include cysteine 258, histidine 283, and glutamate 287. Residues 315–319 (KMSKS) carry the 'KMSKS' region motif. ATP is bound at residue lysine 318.

It belongs to the class-I aminoacyl-tRNA synthetase family. Monomer. Zn(2+) is required as a cofactor.

The protein resides in the cytoplasm. The enzyme catalyses tRNA(Cys) + L-cysteine + ATP = L-cysteinyl-tRNA(Cys) + AMP + diphosphate. This chain is Cysteine--tRNA ligase, found in Synechococcus sp. (strain JA-2-3B'a(2-13)) (Cyanobacteria bacterium Yellowstone B-Prime).